The chain runs to 152 residues: Large ribosomal subunit protein bL9 (152 aa).

Belongs to the bacterial ribosomal protein bL9 family.

In terms of biological role, binds to the 23S rRNA. In Synechococcus sp. (strain CC9311), this protein is Large ribosomal subunit protein bL9.